A 59-amino-acid chain; its full sequence is Large ribosomal subunit protein bL32 (59 aa).

This sequence belongs to the bacterial ribosomal protein bL32 family.

This Synechococcus sp. (strain JA-2-3B'a(2-13)) (Cyanobacteria bacterium Yellowstone B-Prime) protein is Large ribosomal subunit protein bL32.